We begin with the raw amino-acid sequence, 339 residues long: Phenylalanine--tRNA ligase alpha subunit (339 aa).

A compositionally biased stretch (basic and acidic residues) spans 1 to 14 (MEAKLKQLEEKAKQ). Residues 1 to 20 (MEAKLKQLEEKAKQDIQAST) are disordered. Position 254 (Glu-254) interacts with Mg(2+).

The protein belongs to the class-II aminoacyl-tRNA synthetase family. Phe-tRNA synthetase alpha subunit type 1 subfamily. As to quaternary structure, tetramer of two alpha and two beta subunits. The cofactor is Mg(2+).

The protein resides in the cytoplasm. The enzyme catalyses tRNA(Phe) + L-phenylalanine + ATP = L-phenylalanyl-tRNA(Phe) + AMP + diphosphate + H(+). In Alkaliphilus metalliredigens (strain QYMF), this protein is Phenylalanine--tRNA ligase alpha subunit.